A 514-amino-acid chain; its full sequence is Putative thymidine phosphorylase (514 aa).

It belongs to the thymidine/pyrimidine-nucleoside phosphorylase family. Type 2 subfamily.

The catalysed reaction is thymidine + phosphate = 2-deoxy-alpha-D-ribose 1-phosphate + thymine. The chain is Putative thymidine phosphorylase from Rhodopseudomonas palustris (strain ATCC BAA-98 / CGA009).